A 393-amino-acid chain; its full sequence is Uroporphyrinogen decarboxylase, chloroplastic (393 aa).

Residues 1 to 64 (MATACPPLSL…AGERNQREEV (64 aa)) form a disordered region. The segment covering 23 to 37 (AGPNAGSSRPSAAAP) has biased composition (low complexity). The segment covering 38–50 (SERRSWRRPRPDG) has biased composition (basic and acidic residues). Residues 73–77 (RQAGR), F92, S122, D123, Y200, S255, and H370 each bind substrate.

It belongs to the uroporphyrinogen decarboxylase family. In terms of assembly, homodimer.

The protein localises to the plastid. Its subcellular location is the chloroplast. The catalysed reaction is uroporphyrinogen III + 4 H(+) = coproporphyrinogen III + 4 CO2. It participates in porphyrin-containing compound metabolism; protoporphyrin-IX biosynthesis; coproporphyrinogen-III from 5-aminolevulinate: step 4/4. In terms of biological role, catalyzes the decarboxylation of four acetate groups of uroporphyrinogen-III to yield coproporphyrinogen-III. The sequence is that of Uroporphyrinogen decarboxylase, chloroplastic (LES22) from Zea mays (Maize).